The chain runs to 239 residues: MRPSGRAADALRSISLTRHYTRHAEGSVLCAFGDTKVLCTASVLAKVPPHKKGSGEGWVTAEYGMLPRATHTRSDREAARGKQTGRTQEIQRLIGRAMRSVFDLAALGEYTVHLDCDVLQADGGTRTAAITGAFVAAHDAVSTMLRDGLIAASPIRDHVAAVSVGMVDGVPVLDLDYAEDSSCDTDMNVVMTGSGGFVEVQGTAEGAPFSRADLDAMTRLAEAGIARLVQHQREALGLA.

Phosphate contacts are provided by residues Arg86 and Gly124–Arg126.

This sequence belongs to the RNase PH family. In terms of assembly, homohexameric ring arranged as a trimer of dimers.

The enzyme catalyses tRNA(n+1) + phosphate = tRNA(n) + a ribonucleoside 5'-diphosphate. Its function is as follows. Phosphorolytic 3'-5' exoribonuclease that plays an important role in tRNA 3'-end maturation. Removes nucleotide residues following the 3'-CCA terminus of tRNAs; can also add nucleotides to the ends of RNA molecules by using nucleoside diphosphates as substrates, but this may not be physiologically important. Probably plays a role in initiation of 16S rRNA degradation (leading to ribosome degradation) during starvation. This Cupriavidus necator (strain ATCC 17699 / DSM 428 / KCTC 22496 / NCIMB 10442 / H16 / Stanier 337) (Ralstonia eutropha) protein is Ribonuclease PH.